Consider the following 529-residue polypeptide: UDP-glucuronosyltransferase 2B18 (529 aa).

Positions methionine 1–glycine 21 are cleaved as a signal peptide. Asparagine 67 and asparagine 68 each carry an N-linked (GlcNAc...) asparagine glycan. A helical membrane pass occupies residues valine 493 to leucine 513.

It belongs to the UDP-glycosyltransferase family. In terms of tissue distribution, expressed in liver, prostate, kidney, testis, adrenal, bile duct, bladder, colon, small intestine, cerebellum and pancreas.

The protein localises to the microsome membrane. The protein resides in the endoplasmic reticulum membrane. The enzyme catalyses glucuronate acceptor + UDP-alpha-D-glucuronate = acceptor beta-D-glucuronoside + UDP + H(+). Its function is as follows. UDPGT is of major importance in the conjugation and subsequent elimination of potentially toxic xenobiotics and endogenous compounds. This isozyme displays activity toward 3-hydroxyandrogens. It is principally active on C19 steroids having a hydroxyl group at position 3-alpha of the steroid molecule and also active on planar phenols and bile acids. The sequence is that of UDP-glucuronosyltransferase 2B18 (UGT2B18) from Macaca fascicularis (Crab-eating macaque).